Here is a 450-residue protein sequence, read N- to C-terminus: UDP-N-acetylmuramoylalanine--D-glutamate ligase (450 aa).

119 to 125 (GSNGKTT) provides a ligand contact to ATP.

This sequence belongs to the MurCDEF family.

It localises to the cytoplasm. The enzyme catalyses UDP-N-acetyl-alpha-D-muramoyl-L-alanine + D-glutamate + ATP = UDP-N-acetyl-alpha-D-muramoyl-L-alanyl-D-glutamate + ADP + phosphate + H(+). The protein operates within cell wall biogenesis; peptidoglycan biosynthesis. In terms of biological role, cell wall formation. Catalyzes the addition of glutamate to the nucleotide precursor UDP-N-acetylmuramoyl-L-alanine (UMA). This is UDP-N-acetylmuramoylalanine--D-glutamate ligase from Streptococcus gordonii (strain Challis / ATCC 35105 / BCRC 15272 / CH1 / DL1 / V288).